Consider the following 219-residue polypeptide: Guanylate kinase (219 aa).

Residues 15-194 form the Guanylate kinase-like domain; that stretch reads GLMFVLSSPS…AFAEVHSILK (180 aa). Residue 22–29 coordinates ATP; that stretch reads SPSGAGKT.

Belongs to the guanylate kinase family.

It localises to the cytoplasm. The enzyme catalyses GMP + ATP = GDP + ADP. Functionally, essential for recycling GMP and indirectly, cGMP. The sequence is that of Guanylate kinase from Rhodopseudomonas palustris (strain BisB18).